The primary structure comprises 523 residues: GMP synthase [glutamine-hydrolyzing] (523 aa).

In terms of domain architecture, Glutamine amidotransferase type-1 spans 8-205 (RILILDFGSQ…IRELCECEAL (198 aa)). Cys-85 serves as the catalytic Nucleophile. Residues His-179 and Glu-181 contribute to the active site. The 193-residue stretch at 206–398 (WTPSNIISDA…LGLPYDMVYR (193 aa)) folds into the GMPS ATP-PPase domain. Position 233 to 239 (233 to 239 (SGGVDSS)) interacts with ATP.

In terms of assembly, homodimer.

The enzyme catalyses XMP + L-glutamine + ATP + H2O = GMP + L-glutamate + AMP + diphosphate + 2 H(+). It functions in the pathway purine metabolism; GMP biosynthesis; GMP from XMP (L-Gln route): step 1/1. Its function is as follows. Catalyzes the synthesis of GMP from XMP. This Alcanivorax borkumensis (strain ATCC 700651 / DSM 11573 / NCIMB 13689 / SK2) protein is GMP synthase [glutamine-hydrolyzing].